A 598-amino-acid polypeptide reads, in one-letter code: Beta-myrcene/(E)-beta-ocimene synthase 2, chloroplastic (598 aa).

The N-terminal 30 residues, Met-1–Ser-30, are a transit peptide targeting the chloroplast. Residues Arg-307, Asp-344, Asp-348, Arg-486, and Asn-489 each contribute to the (2E)-geranyl diphosphate site. Positions 344 and 348 each coordinate Mg(2+). Positions Asp-344 to Asp-348 match the DDXXD motif motif. Residues Asn-489, Thr-493, and Glu-497 each contribute to the Mg(2+) site.

It belongs to the terpene synthase family. Tpsb subfamily. Mg(2+) is required as a cofactor. It depends on Mn(2+) as a cofactor. In terms of tissue distribution, expressed exclusively in mature flowers, but not in inmmature buds.

Its subcellular location is the plastid. It is found in the chloroplast. It catalyses the reaction (2E)-geranyl diphosphate = beta-myrcene + diphosphate. The protein operates within secondary metabolite biosynthesis; terpenoid biosynthesis. Involved in monoterpene (C10) biosynthesis. The major products are alpha- and beta-pinene, sabinene, beta-myrcene, (E)-beta-ocimene and limonene. This chain is Beta-myrcene/(E)-beta-ocimene synthase 2, chloroplastic (TPS24), found in Arabidopsis thaliana (Mouse-ear cress).